The following is a 750-amino-acid chain: MYGLVVCLFGMIFGLIQYQGINKLPVHAAMKEISDLIYETCKTYLITQGKFIIILWALVAAIIVAYFGGLNHLAPDKVVFILACSLLGIAGSYTVAWFGMRINTFANSRTAFASLGGKPFPTYAIPLRAGMSIGMLLISIELFAMLCILLFIPVDYAGPCFIGFAIGESLGASVLRIAGGIFTKIADIGSDLMKIVFKIKEDDARNPGVIADCTGDNAGDSVGPTADGFETYGVTGVALISFILLAIKDPSIQVSLLVWIFAMRLVMIVASAVSYWVNDALAKMKYGNADEMNFEKPLITLVWLTSIVSIVLTYIASYMLIAQLGDGTMWWKLASIITCGTIAGALIPELVDRFTSTECAFVRNVVQCSKEGGAALNILSGLVAGNFSAYWMGLAIIVLMGAAFGFSTLGLDVMMLAPSVFAFGLVAFGFLSMGPVTIAVDSYGPVTDNAQSVYELSLIETLPNISNSIESEFGFKPDFENAKRYLEANDGAGNTFKATAKPVLIGTAVVGSTTMIFSIIMILTGGLADTGAIAKLSILWPPFLLGLLMGGAVIYWFTGASMNAVTTGAYYAVAFIKKNIKLDGVTKASTEDSKKVVEICTRFAQKGMINLFLTIFFSTLAFACLESYLFIGYLISIALFGLYQAIFMANAGGAWDNAKKVVETELHAKGTELHDASVVGDTVGDPFKDTSSVALNPIIKFTTLFGLLAIELAIKLPTTISVSLAVVFFLLSLVFVHRSFFSMRIAVDKD.

5 helical membrane passes run 1–21 (MYGLVVCLFGMIFGLIQYQGI), 51–71 (FIIILWALVAAIIVAYFGGLN), 78–98 (VVFILACSLLGIAGSYTVAWF), 133–153 (IGMLLISIELFAMLCILLFIP), and 161–181 (FIGFAIGESLGASVLRIAGGI). K184 lines the substrate pocket. 3 residues coordinate Mg(2+): D187, D191, and D216. Helical transmembrane passes span 227 to 247 (DGFETYGVTGVALISFILLAI), 257 to 277 (LVWIFAMRLVMIVASAVSYWV), 301 to 321 (LVWLTSIVSIVLTYIASYMLI), 327 to 347 (GTMWWKLASIITCGTIAGALI), 391 to 411 (WMGLAIIVLMGAAFGFSTLGL), and 420 to 440 (VFAFGLVAFGFLSMGPVTIAV). D448 lines the Mg(2+) pocket. A run of 4 helical transmembrane segments spans residues 503–523 (VLIGTAVVGSTTMIFSIIMIL), 538–558 (ILWPPFLLGLLMGGAVIYWFT), 607–627 (GMINLFLTIFFSTLAFACLES), and 629–649 (LFIGYLISIALFGLYQAIFMA). D656, D681, and D685 together coordinate Ca(2+). K688 is a binding site for substrate. The next 2 helical transmembrane spans lie at 694 to 714 (ALNPIIKFTTLFGLLAIELAI) and 716 to 736 (LPTTISVSLAVVFFLLSLVFV).

This sequence belongs to the H(+)-translocating pyrophosphatase (TC 3.A.10) family. K(+)-insensitive subfamily. As to quaternary structure, homodimer. Requires Mg(2+) as cofactor.

The protein localises to the cell inner membrane. The catalysed reaction is diphosphate + H2O + H(+)(in) = 2 phosphate + 2 H(+)(out). In terms of biological role, proton pump that utilizes the energy of pyrophosphate hydrolysis as the driving force for proton movement across the membrane. Generates a proton motive force. This is K(+)-insensitive pyrophosphate-energized proton pump from Chlorobaculum tepidum (strain ATCC 49652 / DSM 12025 / NBRC 103806 / TLS) (Chlorobium tepidum).